The following is a 197-amino-acid chain: MAVSPKINRREHILQCLAQMLETSPGQRITTAKLASEVGVSEAALYRHFPSKARMFEGLIEFIEESLLSRINIIMDDEKDTMRRCQLVLQLLLIFAERNPGISRVLNGDALLGENERLRSRISTLFAKIETQLKQILREKTLREGKGFNLDEAILANLLLAFAEGRIAQFVRSEFKLKPTQHFDEQWRFIQHQLLQS.

In terms of domain architecture, HTH tetR-type spans 7 to 67 (INRREHILQC…GLIEFIEESL (61 aa)). Residues 30–49 (TTAKLASEVGVSEAALYRHF) constitute a DNA-binding region (H-T-H motif).

This sequence belongs to the nucleoid occlusion factor SlmA family. As to quaternary structure, homodimer. Interacts with FtsZ.

Its subcellular location is the cytoplasm. The protein resides in the nucleoid. Required for nucleoid occlusion (NO) phenomenon, which prevents Z-ring formation and cell division over the nucleoid. Acts as a DNA-associated cell division inhibitor that binds simultaneously chromosomal DNA and FtsZ, and disrupts the assembly of FtsZ polymers. SlmA-DNA-binding sequences (SBS) are dispersed on non-Ter regions of the chromosome, preventing FtsZ polymerization at these regions. This is Nucleoid occlusion factor SlmA from Shewanella sp. (strain MR-7).